The following is a 254-amino-acid chain: Phytolongin Phyl1.1 (254 aa).

A Longin domain is found at 12–113 (CVSRDNQILY…TAMIGSINVE (102 aa)). Residues 138–173 (ELKSSNLGEQSEGSNSTKAPLLGRLSKQEKKKGKDH) form a disordered region. Polar residues predominate over residues 145–155 (GEQSEGSNSTK). A helical; Anchor for type IV membrane protein membrane pass occupies residues 226–246 (IVLAIDAAICLTLFGIWLAIC).

Belongs to the synaptobrevin family.

It is found in the membrane. Non-SNARE longin protein involved in membrane-trafficking machinery. The polypeptide is Phytolongin Phyl1.1 (Arabidopsis thaliana (Mouse-ear cress)).